The following is a 563-amino-acid chain: Dihydroxy-acid dehydratase (563 aa).

Cys-51 serves as a coordination point for [2Fe-2S] cluster. Mg(2+) is bound at residue Asp-83. Residue Cys-124 participates in [2Fe-2S] cluster binding. 2 residues coordinate Mg(2+): Asp-125 and Lys-126. Position 126 is an N6-carboxylysine (Lys-126). Cys-196 lines the [2Fe-2S] cluster pocket. Residue Glu-448 participates in Mg(2+) binding. The active-site Proton acceptor is the Ser-474.

It belongs to the IlvD/Edd family. As to quaternary structure, homodimer. The cofactor is [2Fe-2S] cluster. Requires Mg(2+) as cofactor.

The enzyme catalyses (2R)-2,3-dihydroxy-3-methylbutanoate = 3-methyl-2-oxobutanoate + H2O. The catalysed reaction is (2R,3R)-2,3-dihydroxy-3-methylpentanoate = (S)-3-methyl-2-oxopentanoate + H2O. It functions in the pathway amino-acid biosynthesis; L-isoleucine biosynthesis; L-isoleucine from 2-oxobutanoate: step 3/4. It participates in amino-acid biosynthesis; L-valine biosynthesis; L-valine from pyruvate: step 3/4. In terms of biological role, functions in the biosynthesis of branched-chain amino acids. Catalyzes the dehydration of (2R,3R)-2,3-dihydroxy-3-methylpentanoate (2,3-dihydroxy-3-methylvalerate) into 2-oxo-3-methylpentanoate (2-oxo-3-methylvalerate) and of (2R)-2,3-dihydroxy-3-methylbutanoate (2,3-dihydroxyisovalerate) into 2-oxo-3-methylbutanoate (2-oxoisovalerate), the penultimate precursor to L-isoleucine and L-valine, respectively. The chain is Dihydroxy-acid dehydratase from Polynucleobacter necessarius subsp. necessarius (strain STIR1).